A 532-amino-acid polypeptide reads, in one-letter code: E3 ubiquitin-protein ligase MGRN1 (532 aa).

G2 carries N-myristoyl glycine lipidation. An RING-type zinc finger spans residues 277 to 316 (ECVVCLSDLRDTLILPCRHLCLCTSCADTLRYQANNCPIC). A Required for TSG101-binding motif is present at residues 384–387 (PSAP). At Y389 the chain carries Phosphotyrosine. The segment at 419-518 (LQKGKTQSKS…QPVPPADIYL (100 aa)) is disordered. A compositionally biased stretch (polar residues) spans 422–435 (GKTQSKSPDSTLRS). Phosphoserine is present on residues S428, S449, S452, and S501. Residues 442–453 (EEDEEKLSEDSD) are compositionally biased toward acidic residues.

As to quaternary structure, interacts with MC1R and MC4R. Interacts with TSG101. Interacts with mislocalized cytosolically exposed PRNP; this interaction alters MGRN1 subcellular location and causes lysosomal enlargement. Autoubiquitinated in vitro. As to expression, widely expressed, with highest levels in brain, heart, kidney and liver. In the CNS, especially prominent in the Purkinje cells of the cerebellum. In the skin, expressed in the basal layer of the epidermis and hair follicles, primarily in the outer root sheath. Isoforms 1, 3, 4 and 5 are equally expressed in the liver. Isoforms 1, 3 and 4 are most abundant in brain, kidney and heart, respectively.

It localises to the early endosome. The protein localises to the cytoplasm. The protein resides in the cell membrane. It is found in the nucleus. It catalyses the reaction S-ubiquitinyl-[E2 ubiquitin-conjugating enzyme]-L-cysteine + [acceptor protein]-L-lysine = [E2 ubiquitin-conjugating enzyme]-L-cysteine + N(6)-ubiquitinyl-[acceptor protein]-L-lysine.. It functions in the pathway protein modification; protein ubiquitination. Functionally, E3 ubiquitin-protein ligase. Mediates TSG101 monoubiquitination at multiple sites. Plays a role in the regulation of endosome-to-lysosome trafficking. Impairs MC1R- and MC4R-signaling by competing with GNAS-binding to MCRs and inhibiting agonist-induced cAMP production. Does not inhibit ADRB2-signaling. Does not promote MC1R ubiquitination. Also acts as a negative regulator of hedgehog signaling. This chain is E3 ubiquitin-protein ligase MGRN1 (Mgrn1), found in Mus musculus (Mouse).